We begin with the raw amino-acid sequence, 384 residues long: Sphingosine 1-phosphate receptor 3 (384 aa).

At 1–34 (MMINPLIYLHYNYTGKLDHRPTVGTSPGTRDPKT) the chain is on the extracellular side. An N-linked (GlcNAc...) asparagine glycan is attached at asparagine 12. A helical membrane pass occupies residues 35–55 (IAFLVVCSFIILENLTVLLAI). Topologically, residues 56–64 (WKNHRFHNR) are cytoplasmic. Residues 65 to 85 (MYFFIGNLALCDLLASVAYLV) traverse the membrane as a helical segment. Residues 86–105 (NLLLSGEKTLQLSPVLWFVR) are Extracellular-facing. A helical membrane pass occupies residues 106 to 126 (EGSMFVTLGASIFSLLAIAIE). Residues 127 to 144 (RHLTMIKMRPYDASKNYR) are Cytoplasmic-facing. The helical transmembrane segment at 145-165 (VFLLIGTCWLVAVLLGALPIL) threads the bilayer. The Extracellular portion of the chain corresponds to 166-186 (GWNCLGNLPDCSTILPLYTKK). Residues 187-207 (YVAFCIIVFIVLLLAMSVLYA) traverse the membrane as a helical segment. Residues 208 to 235 (RIYILVKSSSQKVSKHRNSEHAMSLLRT) lie on the Cytoplasmic side of the membrane. A helical transmembrane segment spans residues 236-256 (VIIVVGVFIACWMPIFVLLLL). The Extracellular portion of the chain corresponds to 257-271 (DVACERPCPILYKAD). The chain crosses the membrane as a helical span at residues 272 to 292 (WFIAVAVLNSAMNPIIYTLAS). The Cytoplasmic segment spans residues 293 to 384 (REMRRAFLGL…REGEGGNGGR (92 aa)). Composition is skewed to polar residues over residues 315-325 (NDSGNKQFQEP) and 336-347 (QTHPNQSQQSSR). A disordered region spans residues 315–384 (NDSGNKQFQE…REGEGGNGGR (70 aa)). Residues 349-359 (AELDREQETGH) show a composition bias toward basic and acidic residues.

This sequence belongs to the G-protein coupled receptor 1 family.

The protein resides in the cell membrane. In terms of biological role, receptor for the lysosphingolipid sphingosine 1-phosphate (S1P). This Takifugu rubripes (Japanese pufferfish) protein is Sphingosine 1-phosphate receptor 3 (s1pr3).